The following is a 474-amino-acid chain: tRNA-2-methylthio-N(6)-dimethylallyladenosine synthase (474 aa).

In terms of domain architecture, MTTase N-terminal spans 3-120 (KKLHIKTWGC…LPEMIDQIEA (118 aa)). The [4Fe-4S] cluster site is built by Cys-12, Cys-49, Cys-83, Cys-157, Cys-161, and Cys-164. Residues 143-375 (RADGPSAFVS…QDRITQQAMR (233 aa)) enclose the Radical SAM core domain. The 64-residue stretch at 378–441 (RQMLGTVQRI…TNSLRGNFIR (64 aa)) folds into the TRAM domain.

It belongs to the methylthiotransferase family. MiaB subfamily. Monomer. It depends on [4Fe-4S] cluster as a cofactor.

It is found in the cytoplasm. The enzyme catalyses N(6)-dimethylallyladenosine(37) in tRNA + (sulfur carrier)-SH + AH2 + 2 S-adenosyl-L-methionine = 2-methylsulfanyl-N(6)-dimethylallyladenosine(37) in tRNA + (sulfur carrier)-H + 5'-deoxyadenosine + L-methionine + A + S-adenosyl-L-homocysteine + 2 H(+). Catalyzes the methylthiolation of N6-(dimethylallyl)adenosine (i(6)A), leading to the formation of 2-methylthio-N6-(dimethylallyl)adenosine (ms(2)i(6)A) at position 37 in tRNAs that read codons beginning with uridine. This Shewanella woodyi (strain ATCC 51908 / MS32) protein is tRNA-2-methylthio-N(6)-dimethylallyladenosine synthase.